Here is a 72-residue protein sequence, read N- to C-terminus: uncharacterized protein (72 aa).

The N-terminal stretch at 1-17 (MSLGLAIAVGIVLGVVA) is a signal peptide.

This is an uncharacterized protein from Schizosaccharomyces pombe (strain 972 / ATCC 24843) (Fission yeast).